The primary structure comprises 84 residues: Seminal ribonuclease (84 aa).

Cystine bridges form between Cys-10/Cys-65, Cys-28/Cys-80, and Cys-35/Cys-42. Substrate is bound by residues 11–15 (KPVNT), Lys-36, and Arg-55.

It belongs to the pancreatic ribonuclease family. Homodimer; disulfide-linked.

The protein resides in the secreted. The catalysed reaction is an [RNA] containing cytidine + H2O = an [RNA]-3'-cytidine-3'-phosphate + a 5'-hydroxy-ribonucleotide-3'-[RNA].. It carries out the reaction an [RNA] containing uridine + H2O = an [RNA]-3'-uridine-3'-phosphate + a 5'-hydroxy-ribonucleotide-3'-[RNA].. The polypeptide is Seminal ribonuclease (SRN) (Giraffa camelopardalis (Giraffe)).